Consider the following 173-residue polypeptide: Thiol-disulfide oxidoreductase ResA (173 aa).

The chain crosses the membrane as a helical; Signal-anchor for type II membrane protein span at residues 10–29 (VIILLILSGAVGFTLYQGYF). The 139-residue stretch at 35–173 (MEIGKEAPNF…LEEYLKKITP (139 aa)) folds into the Thioredoxin domain. The cysteines at positions 73 and 76 are disulfide-linked.

Belongs to the thioredoxin family. ResA subfamily.

It localises to the cell membrane. The protein operates within protein modification; cytochrome c assembly. Functionally, thiol-disulfide oxidoreductase which is required in disulfide reduction during c-type cytochrome synthesis. May accept reducing equivalents from CcdA, leading to breakage of disulfide bonds in apocytochrome c; following this reduction heme can be covalently attached. In Bacillus cereus (strain ATCC 10987 / NRS 248), this protein is Thiol-disulfide oxidoreductase ResA.